The following is an 84-amino-acid chain: NAD(P)H-quinone oxidoreductase subunit O (84 aa).

This sequence belongs to the complex I NdhO subunit family. As to quaternary structure, NDH-1 can be composed of about 15 different subunits; different subcomplexes with different compositions have been identified which probably have different functions.

Its subcellular location is the cellular thylakoid membrane. It carries out the reaction a plastoquinone + NADH + (n+1) H(+)(in) = a plastoquinol + NAD(+) + n H(+)(out). The enzyme catalyses a plastoquinone + NADPH + (n+1) H(+)(in) = a plastoquinol + NADP(+) + n H(+)(out). Functionally, NDH-1 shuttles electrons from an unknown electron donor, via FMN and iron-sulfur (Fe-S) centers, to quinones in the respiratory and/or the photosynthetic chain. The immediate electron acceptor for the enzyme in this species is believed to be plastoquinone. Couples the redox reaction to proton translocation, and thus conserves the redox energy in a proton gradient. Cyanobacterial NDH-1 also plays a role in inorganic carbon-concentration. The protein is NAD(P)H-quinone oxidoreductase subunit O of Parasynechococcus marenigrum (strain WH8102).